The following is a 222-amino-acid chain: Bone marrow proteoglycan (222 aa).

Positions 1–16 (MKLPLLLALLFGAVSA) are cleaved as a signal peptide. The propeptide at 17 to 105 (LHLRSETSTF…VKVVGIPGCQ (89 aa)) is acidic. The O-linked (GalNAc...) threonine; partial glycan is linked to threonine 23. Serine 24 is a glycosylation site (O-linked (GalNAc...) serine). Threonine 25 carries O-linked (GalNAc...) threonine glycosylation. A disordered region spans residues 25–75 (TFETPLGAKTLPEDEETPEQEMEETPCRELEEEEEWGSGSEDASKKDGAVE). Threonine 34 is a glycosylation site (O-linked (GalNAc...) threonine; partial). The span at 37 to 60 (EDEETPEQEMEETPCRELEEEEEW) shows a compositional bias: acidic residues. O-linked (Xyl...) (chondroitin sulfate) serine glycosylation occurs at serine 62. Asparagine 86 carries N-linked (GlcNAc...) asparagine glycosylation. Residues 104–222 (CQTCRYLLVR…LRRLPFICSY (119 aa)) enclose the C-type lectin domain. Intrachain disulfides connect cysteine 125–cysteine 220 and cysteine 197–cysteine 212.

In terms of assembly, in pregnancy serum, the proform exists as a disulfide-linked 2:2 heterotetramer with PAPPA, as a disulfide-linked 2:2 heterotetramer with AGT, and as a complex (probably a 2:2:2 heterohexamer) with AGT and C3dg. In terms of processing, nitrated. As to expression, detected in plasma and urine (at protein level). Detected in placenta (at protein level). High levels of the proform in placenta and pregnancy serum; in placenta, localized to X cells of septa and anchoring villi. Lower levels in a variety of other tissues including kidney, myometrium, endometrium, ovaries, breast, prostate, bone marrow and colon.

The protein resides in the secreted. The protein localises to the cytoplasmic vesicle. It localises to the secretory vesicle. Its function is as follows. Cytotoxin and helminthotoxin. Also induces non-cytolytic histamine release from human basophils. Involved in antiparasitic defense mechanisms and immune hypersensitivity reactions. The proform acts as a proteinase inhibitor, reducing the activity of PAPPA. In Homo sapiens (Human), this protein is Bone marrow proteoglycan (PRG2).